Reading from the N-terminus, the 205-residue chain is Dephospho-CoA kinase (205 aa).

In terms of domain architecture, DPCK spans 4-203 (KIGITGGIGS…QKIHYLCSAK (200 aa)). 12–17 (GSGKSV) contacts ATP.

The protein belongs to the CoaE family.

It localises to the cytoplasm. The catalysed reaction is 3'-dephospho-CoA + ATP = ADP + CoA + H(+). It functions in the pathway cofactor biosynthesis; coenzyme A biosynthesis; CoA from (R)-pantothenate: step 5/5. Catalyzes the phosphorylation of the 3'-hydroxyl group of dephosphocoenzyme A to form coenzyme A. In Bacteroides fragilis (strain ATCC 25285 / DSM 2151 / CCUG 4856 / JCM 11019 / LMG 10263 / NCTC 9343 / Onslow / VPI 2553 / EN-2), this protein is Dephospho-CoA kinase.